The following is a 518-amino-acid chain: Glutamate--cysteine ligase (518 aa).

Belongs to the glutamate--cysteine ligase type 1 family. Type 1 subfamily.

The enzyme catalyses L-cysteine + L-glutamate + ATP = gamma-L-glutamyl-L-cysteine + ADP + phosphate + H(+). The protein operates within sulfur metabolism; glutathione biosynthesis; glutathione from L-cysteine and L-glutamate: step 1/2. The protein is Glutamate--cysteine ligase of Salmonella arizonae (strain ATCC BAA-731 / CDC346-86 / RSK2980).